A 481-amino-acid chain; its full sequence is Cysteine--tRNA ligase (481 aa).

C29 contributes to the Zn(2+) binding site. The 'HIGH' region signature appears at 31–41 (VTVYDYCHIGH). The Zn(2+) site is built by C209, H234, and E238. The 'KMSKS' region signature appears at 266 to 270 (KMSKS). An ATP-binding site is contributed by K269.

The protein belongs to the class-I aminoacyl-tRNA synthetase family. As to quaternary structure, monomer. Requires Zn(2+) as cofactor.

Its subcellular location is the cytoplasm. The enzyme catalyses tRNA(Cys) + L-cysteine + ATP = L-cysteinyl-tRNA(Cys) + AMP + diphosphate. The polypeptide is Cysteine--tRNA ligase (Syntrophotalea carbinolica (strain DSM 2380 / NBRC 103641 / GraBd1) (Pelobacter carbinolicus)).